We begin with the raw amino-acid sequence, 287 residues long: NAD-dependent protein deacylase sir-2.2 (287 aa).

The region spanning 10–287 (AELCENSLKK…YKISDVLKEM (278 aa)) is the Deacetylase sirtuin-type domain. NAD(+) is bound by residues 35-55 (GAGI…VGLY) and 116-119 (QNVD). Residue His134 is the Proton acceptor of the active site. Cys142, Cys145, Cys196, and Cys199 together coordinate Zn(2+). NAD(+) contacts are provided by residues 236-238 (GTS), 262-264 (NIG), and Ile280.

It belongs to the sirtuin family. Class II subfamily. In terms of assembly, interacts with pyc-1, pcca-1 and mccc-1. It depends on Zn(2+) as a cofactor. As to expression, ubiquitously expressed with high expression in the pharynx, body wall muscles and gonad.

The protein resides in the mitochondrion matrix. The protein localises to the mitochondrion. The enzyme catalyses N(6)-acetyl-L-lysyl-[protein] + NAD(+) + H2O = 2''-O-acetyl-ADP-D-ribose + nicotinamide + L-lysyl-[protein]. In terms of biological role, NAD-dependent protein deacylase. Catalyzes the NAD-dependent hydrolysis of acyl groups from lysine residues. Plays a role in oxidative stress resistance. This is NAD-dependent protein deacylase sir-2.2 (sir-2.2) from Caenorhabditis elegans.